Consider the following 130-residue polypeptide: Vascular-related unknown protein 3 (130 aa).

A disordered region spans residues 45-81 (DDSSMMSDAASPMGCVEEDTASSPSNRTEGYSGMEDN).

Its function is as follows. Involved in the regulation of plant growth. This is Vascular-related unknown protein 3 from Arabidopsis thaliana (Mouse-ear cress).